The primary structure comprises 131 residues: Colicin-N immunity protein (131 aa).

2 helical membrane passes run 66–84 (ILTPFTILYISMIYCFLLT) and 104–124 (VFVFFLYNTIYWDIYIHIFVL).

The protein localises to the cell membrane. The polypeptide is Colicin-N immunity protein (cni) (Escherichia coli).